A 918-amino-acid chain; its full sequence is Cap-specific mRNA (nucleoside-2'-O-)-methyltransferase 1 (918 aa).

Residues 1–18 (MADRKSDEGEDEYQHKEQ) show a composition bias toward basic and acidic residues. Disordered regions lie at residues 1-56 (MADR…EERA) and 62-81 (KRGY…EEEP). Residues 19 to 30 (MVTNRTSSFQPK) show a composition bias toward polar residues. Residues 43–56 (RAADRREEFMEERA) show a composition bias toward basic and acidic residues. Over residues 68–80 (GDDEEDDFTAEEE) the composition is skewed to acidic residues. One can recognise a G-patch domain in the interval 86–132 (PLTVAERLMAAMGHKAGEGLGKHGQGISEPIASSTQRGRTGLGHNAG). The RrmJ-type SAM-dependent 2'-O-MTase domain occupies 236 to 465 (FFQNRAAMKT…ERYITCKGLR (230 aa)). The S-adenosyl-L-methionine site is built by Gly-298 and Asp-379. Lys-419 functions as the Proton acceptor in the catalytic mechanism.

It carries out the reaction a 5'-end (N(7)-methyl 5'-triphosphoguanosine)-ribonucleoside in mRNA + S-adenosyl-L-methionine = a 5'-end (N(7)-methyl 5'-triphosphoguanosine)-(2'-O-methyl-ribonucleoside) in mRNA + S-adenosyl-L-homocysteine + H(+). Its function is as follows. S-adenosyl-L-methionine-dependent methyltransferase that mediates mRNA cap1 2'-O-ribose methylation to the 5'-cap structure of mRNAs. Methylates the ribose of the first nucleotide of a m(7)GpppG-capped mRNA to produce m(7)GpppNmp (cap1). Cap1 modification is linked to higher levels of translation. The sequence is that of Cap-specific mRNA (nucleoside-2'-O-)-methyltransferase 1 from Caenorhabditis elegans.